The following is a 140-amino-acid chain: Small ribosomal subunit protein uS19 (140 aa).

The interval I43 to I71 is disordered. The segment covering Q52–P63 has biased composition (basic and acidic residues).

It belongs to the universal ribosomal protein uS19 family.

Protein S19 forms a complex with S13 that binds strongly to the 16S ribosomal RNA. The protein is Small ribosomal subunit protein uS19 of Haloquadratum walsbyi (strain DSM 16790 / HBSQ001).